Here is a 42-residue protein sequence, read N- to C-terminus: Photosystem I reaction center subunit IX (42 aa).

A helical transmembrane segment spans residues 7–27 (YLSVAPVLSTLWFGILAGLLI).

It belongs to the PsaJ family.

The protein resides in the plastid. It is found in the chloroplast thylakoid membrane. May help in the organization of the PsaE and PsaF subunits. The chain is Photosystem I reaction center subunit IX from Lemna minor (Common duckweed).